We begin with the raw amino-acid sequence, 51 residues long: Cuticle protein CP575 (51 aa).

Residues 1–51 (GDIIDVDNDLFEHEQDGVAGTSVHGEYEAYDAYGNEYEVKYIADHLGFRVL) enclose the Chitin-binding type R&amp;R domain.

In terms of tissue distribution, calcified shell.

In Cancer pagurus (Rock crab), this protein is Cuticle protein CP575.